Here is a 255-residue protein sequence, read N- to C-terminus: Putative cysteine-rich repeat secretory protein 10 (255 aa).

Positions 1-26 (MFSSSVSISILVVVAMQFSFIHNVLS) are cleaved as a signal peptide. 2 consecutive Gnk2-homologous domains span residues 33-134 (YLQH…EIYT) and 140-252 (FKHY…LYPF).

It belongs to the cysteine-rich repeat secretory protein family.

It localises to the secreted. This Arabidopsis thaliana (Mouse-ear cress) protein is Putative cysteine-rich repeat secretory protein 10 (CRRSP10).